The primary structure comprises 58 residues: Large ribosomal subunit protein uL30 (58 aa).

The protein belongs to the universal ribosomal protein uL30 family. Part of the 50S ribosomal subunit.

This Phocaeicola vulgatus (strain ATCC 8482 / DSM 1447 / JCM 5826 / CCUG 4940 / NBRC 14291 / NCTC 11154) (Bacteroides vulgatus) protein is Large ribosomal subunit protein uL30.